Consider the following 325-residue polypeptide: Protein VP6-B (325 aa).

Disordered stretches follow at residues 23–123 (INLI…TIGA) and 176–229 (VAEQ…EEQA). Basic and acidic residues-rich tracts occupy residues 32–52 (ESGK…ESKD) and 61–79 (SQKK…DRRI). A compositionally biased stretch (gly residues) spans 106 to 123 (KVGGGGGNADAGVGTIGA). 2 stretches are compositionally biased toward basic and acidic residues: residues 176 to 201 (VAEQ…AAER) and 210 to 226 (PHGD…KTSE).

Belongs to the orbivirus VP6 family.

The protein resides in the virion. In terms of biological role, surrounds and interacts with the genomic dsRNA. Possesses ss- and dsRNA-binding capacity. Its hydrophilic nature and capability to bind ss- and dsRNA suggest that it interacts with BTV genomic RNA. The protein is Protein VP6-B (Segment-9) of Bluetongue virus 10 (isolate USA) (BTV 10).